The following is a 375-amino-acid chain: Dual-specificity RNA methyltransferase RlmN (375 aa).

Glu-94 (proton acceptor) is an active-site residue. The Radical SAM core domain maps to 100 to 339 (EDDRATLCVS…VTVRKTRGDD (240 aa)). A disulfide bond links Cys-107 and Cys-344. Positions 114, 118, and 121 each coordinate [4Fe-4S] cluster. S-adenosyl-L-methionine contacts are provided by residues 168–169 (GE), Ser-200, 222–224 (SLH), and Asn-301. Residue Cys-344 is the S-methylcysteine intermediate of the active site.

This sequence belongs to the radical SAM superfamily. RlmN family. It depends on [4Fe-4S] cluster as a cofactor.

It localises to the cytoplasm. The enzyme catalyses adenosine(2503) in 23S rRNA + 2 reduced [2Fe-2S]-[ferredoxin] + 2 S-adenosyl-L-methionine = 2-methyladenosine(2503) in 23S rRNA + 5'-deoxyadenosine + L-methionine + 2 oxidized [2Fe-2S]-[ferredoxin] + S-adenosyl-L-homocysteine. It carries out the reaction adenosine(37) in tRNA + 2 reduced [2Fe-2S]-[ferredoxin] + 2 S-adenosyl-L-methionine = 2-methyladenosine(37) in tRNA + 5'-deoxyadenosine + L-methionine + 2 oxidized [2Fe-2S]-[ferredoxin] + S-adenosyl-L-homocysteine. Specifically methylates position 2 of adenine 2503 in 23S rRNA and position 2 of adenine 37 in tRNAs. m2A2503 modification seems to play a crucial role in the proofreading step occurring at the peptidyl transferase center and thus would serve to optimize ribosomal fidelity. The chain is Dual-specificity RNA methyltransferase RlmN from Vibrio campbellii (strain ATCC BAA-1116).